We begin with the raw amino-acid sequence, 196 residues long: Imidazoleglycerol-phosphate dehydratase (196 aa).

This sequence belongs to the imidazoleglycerol-phosphate dehydratase family.

It localises to the cytoplasm. The catalysed reaction is D-erythro-1-(imidazol-4-yl)glycerol 3-phosphate = 3-(imidazol-4-yl)-2-oxopropyl phosphate + H2O. It participates in amino-acid biosynthesis; L-histidine biosynthesis; L-histidine from 5-phospho-alpha-D-ribose 1-diphosphate: step 6/9. The chain is Imidazoleglycerol-phosphate dehydratase from Clostridium botulinum (strain 657 / Type Ba4).